The following is a 152-amino-acid chain: Ribosome maturation factor RimP (152 aa).

The protein belongs to the RimP family.

The protein resides in the cytoplasm. Required for maturation of 30S ribosomal subunits. In Pectobacterium atrosepticum (strain SCRI 1043 / ATCC BAA-672) (Erwinia carotovora subsp. atroseptica), this protein is Ribosome maturation factor RimP.